Here is a 479-residue protein sequence, read N- to C-terminus: Ribosomal RNA small subunit methyltransferase F (479 aa).

S-adenosyl-L-methionine contacts are provided by residues 128 to 134, Glu152, Asp179, and Asp197; that span reads ASAPGSK. The Nucleophile role is filled by Cys250.

Belongs to the class I-like SAM-binding methyltransferase superfamily. RsmB/NOP family.

The protein resides in the cytoplasm. The enzyme catalyses cytidine(1407) in 16S rRNA + S-adenosyl-L-methionine = 5-methylcytidine(1407) in 16S rRNA + S-adenosyl-L-homocysteine + H(+). Specifically methylates the cytosine at position 1407 (m5C1407) of 16S rRNA. This is Ribosomal RNA small subunit methyltransferase F from Shewanella halifaxensis (strain HAW-EB4).